The following is a 131-amino-acid chain: Sperm microtubule inner protein 11 (131 aa).

A disordered region spans residues 18–44 (KKRNTTEETNQKEPEPTRLPPIISKDG). Positions 21 to 33 (NTTEETNQKEPEP) are enriched in basic and acidic residues.

As to quaternary structure, microtubule inner protein component of sperm flagellar doublet microtubules.

It is found in the cytoplasm. Its subcellular location is the cytoskeleton. The protein localises to the flagellum axoneme. Functionally, microtubule inner protein (MIP) part of the dynein-decorated doublet microtubules (DMTs) in flagellum axoneme. May serve to reinforce and thus stabilize the microtubule structure in the sperm flagella. The polypeptide is Sperm microtubule inner protein 11 (Homo sapiens (Human)).